The chain runs to 288 residues: Acetyl-coenzyme A carboxylase carboxyl transferase subunit beta (288 aa).

The CoA carboxyltransferase N-terminal domain maps to Leu24 to Ala288.

Belongs to the AccD/PCCB family. As to quaternary structure, acetyl-CoA carboxylase is a heterohexamer composed of biotin carboxyl carrier protein (AccB), biotin carboxylase (AccC) and two subunits each of ACCase subunit alpha (AccA) and ACCase subunit beta (AccD).

The protein resides in the cytoplasm. The catalysed reaction is N(6)-carboxybiotinyl-L-lysyl-[protein] + acetyl-CoA = N(6)-biotinyl-L-lysyl-[protein] + malonyl-CoA. It functions in the pathway lipid metabolism; malonyl-CoA biosynthesis; malonyl-CoA from acetyl-CoA: step 1/1. In terms of biological role, component of the acetyl coenzyme A carboxylase (ACC) complex. Biotin carboxylase (BC) catalyzes the carboxylation of biotin on its carrier protein (BCCP) and then the CO(2) group is transferred by the transcarboxylase to acetyl-CoA to form malonyl-CoA. This chain is Acetyl-coenzyme A carboxylase carboxyl transferase subunit beta, found in Methylocella silvestris (strain DSM 15510 / CIP 108128 / LMG 27833 / NCIMB 13906 / BL2).